We begin with the raw amino-acid sequence, 190 residues long: Glutathione peroxidase 2 (190 aa).

Sec-40 is a catalytic residue. Residue Sec-40 is a non-standard amino acid, selenocysteine.

This sequence belongs to the glutathione peroxidase family. As to quaternary structure, homotetramer. As to expression, mucosal epithelium of the gastrointestinal tract.

The protein resides in the cytoplasm. The protein localises to the cytosol. The catalysed reaction is 2 glutathione + H2O2 = glutathione disulfide + 2 H2O. The enzyme catalyses a hydroperoxy polyunsaturated fatty acid + 2 glutathione = a hydroxy polyunsaturated fatty acid + glutathione disulfide + H2O. It catalyses the reaction tert-butyl hydroperoxide + 2 glutathione = tert-butanol + glutathione disulfide + H2O. It carries out the reaction cumene hydroperoxide + 2 glutathione = 2-phenylpropan-2-ol + glutathione disulfide + H2O. The catalysed reaction is (13S)-hydroperoxy-(9Z,11E)-octadecadienoate + 2 glutathione = (13S)-hydroxy-(9Z,11E)-octadecadienoate + glutathione disulfide + H2O. The enzyme catalyses (5S)-hydroperoxy-(6E,8Z,11Z,14Z)-eicosatetraenoate + 2 glutathione = (5S)-hydroxy-(6E,8Z,11Z,14Z)-eicosatetraenoate + glutathione disulfide + H2O. It catalyses the reaction (12R)-hydroperoxy-(5Z,8Z,10E,14Z)-eicosatetraenoate + 2 glutathione = (12R)-hydroxy-(5Z,8Z,10E,14Z)-eicosatetraenoate + glutathione disulfide + H2O. It carries out the reaction (15S)-hydroperoxy-(5Z,8Z,11Z,13E)-eicosatetraenoate + 2 glutathione = (15S)-hydroxy-(5Z,8Z,11Z,13E)-eicosatetraenoate + glutathione disulfide + H2O. Its function is as follows. Catalyzes the reduction of hydroperoxides in a glutathione-dependent manner thus regulating cellular redox homeostasis. Can reduce small soluble hydroperoxide such as H2O2. Can reduce cumene hydroperoxide and tert-butyl hydroperoxide, as well as several fatty acid-derived hydroperoxides. Cannot reduce phosphatidycholine hydroperoxide. In Rattus norvegicus (Rat), this protein is Glutathione peroxidase 2 (Gpx2).